Consider the following 100-residue polypeptide: Integration host factor subunit alpha (100 aa).

The protein belongs to the bacterial histone-like protein family. Heterodimer of an alpha and a beta chain.

Functionally, this protein is one of the two subunits of integration host factor, a specific DNA-binding protein that functions in genetic recombination as well as in transcriptional and translational control. This Rhizorhabdus wittichii (strain DSM 6014 / CCUG 31198 / JCM 15750 / NBRC 105917 / EY 4224 / RW1) (Sphingomonas wittichii) protein is Integration host factor subunit alpha.